We begin with the raw amino-acid sequence, 209 residues long: Guanylate kinase (209 aa).

The Guanylate kinase-like domain maps to 7–185 (GNLYIVAAPS…AAMELQSIVI (179 aa)). 14–21 (APSGGGKT) is an ATP binding site.

The protein belongs to the guanylate kinase family.

It localises to the cytoplasm. It carries out the reaction GMP + ATP = GDP + ADP. Functionally, essential for recycling GMP and indirectly, cGMP. In Legionella pneumophila (strain Paris), this protein is Guanylate kinase.